Here is a 556-residue protein sequence, read N- to C-terminus: Neurofilament light polypeptide (556 aa).

Ser2 carries the post-translational modification N-acetylserine. The tract at residues 2–94 (SSYGYDPFFP…KSIRSQERAQ (93 aa)) is head. An IF rod domain is found at 91–402 (ERAQLQDLND…KLLEGEETRL (312 aa)). Residues 95–126 (LQDLNDRFACFIERVHELEQQNKVLEAELLVL) are coil 1A. Positions 127-139 (RQKHAEPSRFRAL) are linker 1. A coil 1B region spans residues 140–235 (YEQEIRELRL…KVHEEELAEL (96 aa)). The interval 236 to 254 (QAQIQYAHLSVEMDVSAKP) is linker 12. A coil 2A region spans residues 255-273 (DLSAALRDIRAQYEKLAAR). A linker 2 region spans residues 274–282 (NMQNAEEWF). The segment at 283–398 (RSRFTVLSES…AAYRKLLEGE (116 aa)) is coil 2B. The tract at residues 399 to 445 (ETRLSFTSVGSITSGYTQTAPTFGRSAYSGLQSTSYLMTTRSFPTYY) is tail, subdomain A. The tract at residues 399 to 556 (ETRLSFTSVG…KEETEVKKKA (158 aa)) is tail. The segment at 446–556 (SSHVQEEQIE…KEETEVKKKA (111 aa)) is tail, subdomain B (acidic). A compositionally biased stretch (low complexity) spans 464 to 473 (KAGEAKAAPA). Residues 464–556 (KAGEAKAAPA…KEETEVKKKA (93 aa)) are disordered. Over residues 474–540 (EEGEEEEKEE…AEETGEEEKE (67 aa)) the composition is skewed to acidic residues. A compositionally biased stretch (basic and acidic residues) spans 541-556 (EKEAAGKEETEVKKKA).

Belongs to the intermediate filament family. Forms homodimers (in vitro).

The protein localises to the cell projection. It localises to the axon. Its subcellular location is the cytoplasm. It is found in the cytoskeleton. In terms of biological role, neurofilaments usually contain three intermediate filament proteins: NEFL, NEFM, and NEFH which are involved in the maintenance of neuronal caliber. May additionally cooperate with the neuronal intermediate filament proteins to form neuronal filamentous networks. The chain is Neurofilament light polypeptide (NEFL) from Coturnix japonica (Japanese quail).